Consider the following 503-residue polypeptide: Probable cytosol aminopeptidase (503 aa).

Residues Lys-270 and Asp-275 each contribute to the Mn(2+) site. The active site involves Lys-282. Residues Asp-293, Asp-352, and Glu-354 each coordinate Mn(2+). Arg-356 is a catalytic residue.

It belongs to the peptidase M17 family. It depends on Mn(2+) as a cofactor.

The protein localises to the cytoplasm. The enzyme catalyses Release of an N-terminal amino acid, Xaa-|-Yaa-, in which Xaa is preferably Leu, but may be other amino acids including Pro although not Arg or Lys, and Yaa may be Pro. Amino acid amides and methyl esters are also readily hydrolyzed, but rates on arylamides are exceedingly low.. It catalyses the reaction Release of an N-terminal amino acid, preferentially leucine, but not glutamic or aspartic acids.. Functionally, presumably involved in the processing and regular turnover of intracellular proteins. Catalyzes the removal of unsubstituted N-terminal amino acids from various peptides. In Yersinia pseudotuberculosis serotype O:1b (strain IP 31758), this protein is Probable cytosol aminopeptidase.